A 1170-amino-acid polypeptide reads, in one-letter code: Short transient receptor potential channel 2 (1170 aa).

Topologically, residues Met-1–Lys-627 are cytoplasmic. 3 disordered regions span residues Ser-64–Thr-113, Ala-142–Gly-231, and Glu-322–Ser-342. Residues Ser-74 to Ser-85 show a composition bias toward polar residues. Over residues Gly-158–Arg-177 the composition is skewed to basic and acidic residues. 4 ANK repeats span residues Lys-300 to Gly-329, Ser-346 to Gln-376, Ile-377 to Gly-405, and Pro-429 to Arg-458. A helical transmembrane segment spans residues Leu-628–Ala-648. Topologically, residues Pro-649–Lys-658 are extracellular. Residues Ile-659–Leu-679 form a helical membrane-spanning segment. The Cytoplasmic segment spans residues Gly-680 to Glu-701. The chain crosses the membrane as a helical span at residues Thr-702–Ile-722. The Extracellular portion of the chain corresponds to Glu-723–Asp-737. A helical transmembrane segment spans residues Val-738 to Ala-758. Residues Tyr-759 to Gln-788 are Cytoplasmic-facing. A helical membrane pass occupies residues Phe-789–Ile-809. Over Leu-810 to Arg-832 the chain is Extracellular. Residues Phe-833 to Val-853 traverse the membrane as a helical segment. The Cytoplasmic portion of the chain corresponds to Pro-854–Ala-898. Residues Met-899–Ile-919 traverse the membrane as a helical segment. Residues Thr-920–Ser-1170 lie on the Extracellular side of the membrane. Residues Arg-1030–Ala-1068 are a coiled coil. Positions Leu-1118–Ser-1170 are disordered.

It belongs to the transient receptor (TC 1.A.4) family. STrpC subfamily. TRPC2 sub-subfamily. As to expression, expressed exclusively in vomeronasal organ neurons (sensory microvilli).

Its subcellular location is the membrane. In terms of biological role, thought to form a receptor-activated calcium permeant cation channel. Probably is operated by a phosphatidylinositol second messenger system activated by receptor tyrosine kinases or G-protein coupled receptors. Is not activated by intracellular calcium store depletion. This chain is Short transient receptor potential channel 2 (Trpc2), found in Rattus norvegicus (Rat).